Consider the following 94-residue polypeptide: DNA-directed RNA polymerase subunit omega (94 aa).

Belongs to the RNA polymerase subunit omega family. The RNAP catalytic core consists of 2 alpha, 1 beta, 1 beta' and 1 omega subunit. When a sigma factor is associated with the core the holoenzyme is formed, which can initiate transcription.

The catalysed reaction is RNA(n) + a ribonucleoside 5'-triphosphate = RNA(n+1) + diphosphate. Functionally, promotes RNA polymerase assembly. Latches the N- and C-terminal regions of the beta' subunit thereby facilitating its interaction with the beta and alpha subunits. This Bifidobacterium animalis subsp. lactis (strain AD011) protein is DNA-directed RNA polymerase subunit omega.